A 178-amino-acid polypeptide reads, in one-letter code: Ribosome maturation factor RimM (178 aa).

The PRC barrel domain occupies 103–177 (SKDEYYFFEI…KIVVKVPEWL (75 aa)).

The protein belongs to the RimM family. In terms of assembly, binds ribosomal protein uS19.

The protein localises to the cytoplasm. Its function is as follows. An accessory protein needed during the final step in the assembly of 30S ribosomal subunit, possibly for assembly of the head region. Essential for efficient processing of 16S rRNA. May be needed both before and after RbfA during the maturation of 16S rRNA. It has affinity for free ribosomal 30S subunits but not for 70S ribosomes. The chain is Ribosome maturation factor RimM from Thermosipho africanus (strain TCF52B).